The following is a 24-amino-acid chain: Humanin-like 13 (24 aa).

Belongs to the humanin family.

The protein resides in the secreted. It localises to the cytoplasm. Plays a role as a neuroprotective and antiapoptotic factor. The polypeptide is Humanin-like 13 (Homo sapiens (Human)).